The primary structure comprises 308 residues: Carbonic anhydrase 4 (308 aa).

The signal sequence occupies residues 1–18 (MQLLFALLALGALRPLAG). An Alpha-carbonic anhydrase domain is found at 21-281 (LHWCYEIQAS…LGDRSVFKSQ (261 aa)). Intrachain disulfides connect Cys24–Cys34 and Cys44–Cys225. N-linked (GlcNAc...) asparagine glycosylation is present at Asn31. Catalysis depends on His86, which acts as the Proton donor/acceptor. His113, His115, and His138 together coordinate Zn(2+). The N-linked (GlcNAc...) asparagine glycan is linked to Asn192. 221–222 (TT) is a substrate binding site. The GPI-anchor amidated serine moiety is linked to residue Ser280. Positions 281 to 308 (QAAGQLLPLPLPTLLVPTLACVMAGLLR) are cleaved as a propeptide — removed in mature form.

The protein belongs to the alpha-carbonic anhydrase family. In terms of assembly, interacts with SLC4A4. The cofactor is Zn(2+).

The protein localises to the cell membrane. The enzyme catalyses hydrogencarbonate + H(+) = CO2 + H2O. Inhibited by acetazolamide. Its function is as follows. Catalyzes the reversible hydration of carbon dioxide into bicarbonate and protons and thus is essential to maintaining intracellular and extracellular pH. May stimulate the sodium/bicarbonate transporter activity of SLC4A4 that acts in pH homeostasis. It is essential for acid overload removal from the retina and retina epithelium, and acid release in the choriocapillaris in the choroid. The protein is Carbonic anhydrase 4 (CA4) of Oryctolagus cuniculus (Rabbit).